The primary structure comprises 131 residues: Large ribosomal subunit protein bL12 (131 aa).

Belongs to the bacterial ribosomal protein bL12 family. In terms of assembly, homodimer. Part of the ribosomal stalk of the 50S ribosomal subunit. Forms a multimeric L10(L12)X complex, where L10 forms an elongated spine to which 2 to 4 L12 dimers bind in a sequential fashion. Binds GTP-bound translation factors.

In terms of biological role, forms part of the ribosomal stalk which helps the ribosome interact with GTP-bound translation factors. Is thus essential for accurate translation. The protein is Large ribosomal subunit protein bL12 of Prochlorococcus marinus (strain NATL2A).